The chain runs to 421 residues: Tyrosine--tRNA ligase 1 (421 aa).

Residue Tyr35 coordinates L-tyrosine. Positions 40-49 (PTADSLHIGH) match the 'HIGH' region motif. Tyr170 and Gln174 together coordinate L-tyrosine. Residues 231-235 (KFGKT) carry the 'KMSKS' region motif. Lys234 contributes to the ATP binding site. The S4 RNA-binding domain occupies 354–420 (LPLVEILVQS…GKKKYFLLTY (67 aa)).

The protein belongs to the class-I aminoacyl-tRNA synthetase family. TyrS type 1 subfamily. In terms of assembly, homodimer.

The protein resides in the cytoplasm. It catalyses the reaction tRNA(Tyr) + L-tyrosine + ATP = L-tyrosyl-tRNA(Tyr) + AMP + diphosphate + H(+). Catalyzes the attachment of tyrosine to tRNA(Tyr) in a two-step reaction: tyrosine is first activated by ATP to form Tyr-AMP and then transferred to the acceptor end of tRNA(Tyr). The sequence is that of Tyrosine--tRNA ligase 1 from Bacillus licheniformis (strain ATCC 14580 / DSM 13 / JCM 2505 / CCUG 7422 / NBRC 12200 / NCIMB 9375 / NCTC 10341 / NRRL NRS-1264 / Gibson 46).